A 186-amino-acid polypeptide reads, in one-letter code: uncharacterized protein (186 aa).

The first 21 residues, 1–21 (MKFFLGSALFLILTFINLVRA), serve as a signal peptide directing secretion. The Extracellular portion of the chain corresponds to 22-142 (EFEFITPAED…AFSVNPIDKK (121 aa)). Asn-62, Asn-75, Asn-93, and Asn-104 each carry an N-linked (GlcNAc...) asparagine glycan. A helical membrane pass occupies residues 143–163 (LAIGLSVGLSCCILIVLFLHF). At 164 to 186 (ATRRERRILKNEKELEMSSYRKH) the chain is on the cytoplasmic side.

It is found in the membrane. This is an uncharacterized protein from Schizosaccharomyces pombe (strain 972 / ATCC 24843) (Fission yeast).